The following is a 558-amino-acid chain: Urease subunit alpha 2 (558 aa).

The 430-residue stretch at 129–558 folds into the Urease domain; sequence GAVDTHVHLL…SVSLNRLYFL (430 aa). Residues H134, H136, and K214 each contribute to the Ni(2+) site. An N6-carboxylysine modification is found at K214. H216 contacts substrate. Residues H243 and H269 each contribute to the Ni(2+) site. Catalysis depends on H317, which acts as the Proton donor. D357 is a Ni(2+) binding site.

Belongs to the metallo-dependent hydrolases superfamily. Urease alpha subunit family. May form a heterohexamer of 3 UreC (alpha) and 3 UreAB (gamma/beta) subunits. May also form a heterotrimer of UreA (gamma), UreB (beta) and UreC (alpha) subunits. Three heterotrimers associate to form the active enzyme. Ni cation is required as a cofactor. Carboxylation allows a single lysine to coordinate two nickel ions.

Its subcellular location is the cytoplasm. It carries out the reaction urea + 2 H2O + H(+) = hydrogencarbonate + 2 NH4(+). It functions in the pathway nitrogen metabolism; urea degradation; CO(2) and NH(3) from urea (urease route): step 1/1. This Streptomyces coelicolor (strain ATCC BAA-471 / A3(2) / M145) protein is Urease subunit alpha 2.